The primary structure comprises 292 residues: Acetyl-coenzyme A carboxylase carboxyl transferase subunit beta (292 aa).

The 257-residue stretch at 36-292 (MWSKCEKCAK…LLRMHEVDYE (257 aa)) folds into the CoA carboxyltransferase N-terminal domain. Zn(2+) is bound by residues Cys40, Cys43, Cys59, and Cys62. The C4-type zinc finger occupies 40–62 (CEKCAKILYTEDLRENFNVCPNC).

It belongs to the AccD/PCCB family. Acetyl-CoA carboxylase is a heterohexamer composed of biotin carboxyl carrier protein (AccB), biotin carboxylase (AccC) and two subunits each of ACCase subunit alpha (AccA) and ACCase subunit beta (AccD). It depends on Zn(2+) as a cofactor.

It is found in the cytoplasm. It carries out the reaction N(6)-carboxybiotinyl-L-lysyl-[protein] + acetyl-CoA = N(6)-biotinyl-L-lysyl-[protein] + malonyl-CoA. Its pathway is lipid metabolism; malonyl-CoA biosynthesis; malonyl-CoA from acetyl-CoA: step 1/1. Component of the acetyl coenzyme A carboxylase (ACC) complex. Biotin carboxylase (BC) catalyzes the carboxylation of biotin on its carrier protein (BCCP) and then the CO(2) group is transferred by the transcarboxylase to acetyl-CoA to form malonyl-CoA. This Clostridium perfringens (strain 13 / Type A) protein is Acetyl-coenzyme A carboxylase carboxyl transferase subunit beta.